Here is a 22-residue protein sequence, read N- to C-terminus: Plasticin-TR (22 aa).

This sequence belongs to the frog skin active peptide (FSAP) family. Plasticin subfamily. As to quaternary structure, exhibits a propensity to self-association and forms helical oligomers in membrane-mimetic environments. As to expression, expressed by the skin glands.

The protein resides in the secreted. It localises to the target cell membrane. Functionally, has no antimicrobial activity against Gram-negative bacterium E.coli ATCC 25922, Gram-positive bacterium S.epidermidis ATCC 12228 and against fungus C.albicans ATCC 24433 at concentrations up to 100 uM. Has an anti-inflammatory effect, since it inhibits the production of the pro-inflammatory cytokines TNF-alpha and IL-1 beta. Has high activity of stimulation of insulin release, which may protect the species from being eaten by predators by causing fatal hypoglycemia. Is not cytotoxic to cancer line cells. Does not show hemolysis on mouse erythrocytes. Adopts a mixture of alpha-helical and beta-sheet structures. The protein is Plasticin-TR of Phyllomedusa trinitatis (Trinidad leaf frog).